Reading from the N-terminus, the 447-residue chain is Clusterin (447 aa).

The signal sequence occupies residues 1–22 (MKTLLLCVGLLLSWERGQVLGD). The Nuclear localization signal signature appears at 77 to 80 (KKNK). Residues asparagine 85 and asparagine 102 are each glycosylated (N-linked (GlcNAc...) asparagine). Cystine bridges form between cysteine 101/cysteine 311, cysteine 112/cysteine 303, cysteine 115/cysteine 300, cysteine 120/cysteine 293, and cysteine 128/cysteine 283. The residue at position 132 (serine 132) is a Phosphoserine. 5 N-linked (GlcNAc...) asparagine glycosylation sites follow: asparagine 144, asparagine 289, asparagine 326, asparagine 352, and asparagine 372. Serine 394 bears the Phosphoserine mark. Residues 441 to 445 (RKKKR) carry the Nuclear localization signal motif.

This sequence belongs to the clusterin family. As to quaternary structure, antiparallel disulfide-linked heterodimer of an alpha chain and a beta chain. Self-associates and forms higher oligomers. Interacts with a broad range of misfolded proteins, including APP, APOC2 and LYZ. Slightly acidic pH promotes interaction with misfolded proteins. Forms high-molecular weight oligomers upon interaction with misfolded proteins. Interacts with APOA1, LRP2, CLUAP1 and PON1. Interacts with the complement membrane attack complex. Interacts (via alpha chain) with XRCC6. Interacts with SYVN1, COMMD1, BTRC, CUL1 and with ubiquitin and SCF (SKP1-CUL1-F-box protein) E3 ubiquitin-protein ligase complexes. Interacts (via alpha chain) with BAX in stressed cells, where BAX undergoes a conformation change leading to association with the mitochondrial membrane. Does not interact with BAX in unstressed cells. Found in a complex with LTF, CLU, EPPIN and SEMG1. Interacts (immaturely glycosylated pre-secreted form) with HSPA5; this interaction promotes CLU stability and facilitates stress-induced CLU retrotranslocation from the secretory pathway to the mitochondria, thereby reducing stress-induced apoptosis by stabilizing mitochondrial membrane integrity. Interacts with BCL2L1; this interaction releases and activates BAX and promotes cell death. Interacts with TGFBR2 and ACVR1. Interacts (secreted form) with STMN3; this interaction may act as an important modulator during neuronal differentiation. Interacts with VLDLR and LRP8. Proteolytically cleaved on its way through the secretory system, probably within the Golgi lumen. Proteolytic cleavage is not necessary for its chaperone activity. All non-secreted forms are not proteolytically cleaved. Chaperone activity of uncleaved forms is dependent on a non-reducing environment. Post-translationally, polyubiquitinated, leading to proteasomal degradation. Under cellular stress, the intracellular level of cleaved form is reduced due to proteasomal degradation. In terms of processing, heavily N-glycosylated. About 30% of the protein mass is comprised of complex N-linked carbohydrate. Endoplasmic reticulum (ER) stress induces changes in glycosylation status and increases level of hypoglycosylated forms. Core carbohydrates are essential for chaperone activity. Non-secreted forms are hypoglycosylated or unglycosylated.

The protein localises to the secreted. Its subcellular location is the nucleus. The protein resides in the cytoplasm. It localises to the mitochondrion membrane. It is found in the cytosol. The protein localises to the microsome. Its subcellular location is the endoplasmic reticulum. The protein resides in the mitochondrion. It localises to the perinuclear region. It is found in the cytoplasmic vesicle. The protein localises to the secretory vesicle. Its subcellular location is the chromaffin granule. Its function is as follows. Functions as extracellular chaperone that prevents aggregation of non native proteins. Prevents stress-induced aggregation of blood plasma proteins. Inhibits formation of amyloid fibrils by APP, APOC2, B2M, CALCA, CSN3, SNCA and aggregation-prone LYZ variants (in vitro). Does not require ATP. Maintains partially unfolded proteins in a state appropriate for subsequent refolding by other chaperones, such as HSPA8/HSC70. Does not refold proteins by itself. Binding to cell surface receptors triggers internalization of the chaperone-client complex and subsequent lysosomal or proteasomal degradation. When secreted, protects cells against apoptosis and against cytolysis by complement: inhibits assembly of the complement membrane attack complex (MAC) by preventing polymerization of C9 pore component of the MAC complex. Intracellular forms interact with ubiquitin and SCF (SKP1-CUL1-F-box protein) E3 ubiquitin-protein ligase complexes and promote the ubiquitination and subsequent proteasomal degradation of target proteins. Promotes proteasomal degradation of COMMD1 and IKBKB. Modulates NF-kappa-B transcriptional activity. Following stress, promotes apoptosis. Inhibits apoptosis when associated with the mitochondrial membrane by interference with BAX-dependent release of cytochrome c into the cytoplasm. Plays a role in the regulation of cell proliferation. An intracellular form suppresses stress-induced apoptosis by stabilizing mitochondrial membrane integrity through interaction with HSPA5. Secreted form does not affect caspase or BAX-mediated intrinsic apoptosis and TNF-induced NF-kappa-B-activity. Secreted form act as an important modulator during neuronal differentiation through interaction with STMN3. Plays a role in the clearance of immune complexes that arise during cell injury. This is Clusterin (CLU) from Oryctolagus cuniculus (Rabbit).